We begin with the raw amino-acid sequence, 403 residues long: Peptidyl-prolyl cis-trans isomerase FKBP8 (403 aa).

The segment at 26–54 is disordered; that stretch reads VLDGVDDAEEEDDLSGLPPLEDMGQPTVE. Residues 28–39 are compositionally biased toward acidic residues; that stretch reads DGVDDAEEEDDL. In terms of domain architecture, PPIase FKBP-type spans 110–195; sequence GQVVTVHLQM…CLEVTLKTAE (86 aa). The stretch at 212-245 is one TPR 1 repeat; that stretch reads ANRKRECGNAHYQRADFVLAANSYDLAIKAITSN. Glycyl lysine isopeptide (Lys-Gly) (interchain with G-Cter in ubiquitin) cross-links involve residues Lys240, Lys262, Lys264, and Lys275. 2 TPR repeats span residues 263-296 and 297-330; these read VKCLNNLAASQLKLDHYRAALRSCSQVLEHQPDN and IKALFRKGKVLAQQGEYSEAIPILRAALKLEPSN. Position 287 is a phosphoserine (Ser287). Glycyl lysine isopeptide (Lys-Gly) (interchain with G-Cter in ubiquitin) cross-links involve residues Lys298, Lys305, Lys325, Lys331, Lys339, Lys342, and Lys343. The chain crosses the membrane as a helical span at residues 381 to 401; sequence WLFGATAVALGGVALSVVIAA.

In terms of assembly, homomultimers or heteromultimers (Potential). Forms heterodimer with calmodulin. When activated by calmodulin and calcium, interacts with the BH4 domain of BCL2 and weakly with BCLX isoform Bcl-X(L). Does not bind and inhibit calcineurin. Interacts with ZFYVE27; may negatively regulate ZFYVE27 phosphorylation. Ca(2+) is required as a cofactor. Ubiquitinated by PRKN during mitophagy, leading to its degradation and enhancement of mitophagy. Deubiquitinated by USP30.

It is found in the mitochondrion membrane. It carries out the reaction [protein]-peptidylproline (omega=180) = [protein]-peptidylproline (omega=0). Its function is as follows. Constitutively inactive PPiase, which becomes active when bound to calmodulin and calcium. Seems to act as a chaperone for BCL2, targets it to the mitochondria and modulates its phosphorylation state. The BCL2/FKBP8/calmodulin/calcium complex probably interferes with the binding of BCL2 to its targets. The active form of FKBP8 may therefore play a role in the regulation of apoptosis. The sequence is that of Peptidyl-prolyl cis-trans isomerase FKBP8 (Fkbp8) from Rattus norvegicus (Rat).